An 804-amino-acid polypeptide reads, in one-letter code: General transcription and DNA repair factor IIH helicase/translocase subunit XPB (804 aa).

2 disordered regions span residues 1-61 (MSLK…NSNE) and 220-255 (QSSKQKSSKPSNEDNVEDKKDITNDSSKETAEKSSS). A compositionally biased stretch (acidic residues) spans 14 to 36 (PDEDLEEYSDYSDVDNYGEEDDD). 2 stretches are compositionally biased toward low complexity: residues 47–60 (NNNKTKAQTTTNSN) and 220–229 (QSSKQKSSKP). Positions 236 to 255 (EDKKDITNDSSKETAEKSSS) are enriched in basic and acidic residues. The Helicase ATP-binding domain maps to 335-497 (MFGNGRARSG…DLNFLIGPKM (163 aa)). 348-355 (LPCGAGKT) contributes to the ATP binding site. Residues 450–453 (DEVH) carry the DEVH box motif. Positions 551–705 (QACQFLIDYH…KVITNLKGME (155 aa)) constitute a Helicase C-terminal domain. Disordered regions lie at residues 736 to 761 (DDGEDTSFGSRSLSRAPAKAKRSSGS) and 782 to 804 (KQLKKDSKEHHALFRKHLYTKRR). Residues 784–793 (LKKDSKEHHA) are compositionally biased toward basic and acidic residues. Residues 794-804 (LFRKHLYTKRR) are compositionally biased toward basic residues.

Belongs to the helicase family. RAD25/XPB subfamily. Component of the 7-subunit TFIIH core complex composed of XPB/ptr8, XPD/rad15, ssl1, tfb1, tfb2, tfb4 and tfb5, which is active in NER. The core complex associates with the 3-subunit CTD-kinase module TFIIK composed of mcs2/cyclin H, mcs6/cdk7 and pmh1/tfb3 to form the 10-subunit holoenzyme (holo-TFIIH) active in transcription.

It localises to the nucleus. The enzyme catalyses Couples ATP hydrolysis with the unwinding of duplex DNA by translocating in the 3'-5' direction.. The catalysed reaction is ATP + H2O = ADP + phosphate + H(+). In terms of biological role, probable ATP-dependent 3'-5' DNA helicase/translocase. Binds dsDNA rather than ssDNA, unzipping it in a translocase rather than classical helicase activity. Component of the general transcription and DNA repair factor IIH (TFIIH) core complex. When complexed to CDK-activating kinase (CAK), involved in RNA transcription by RNA polymerase II. Also involved in transcription-coupled nucleotide excision repair (NER) of damaged DNA. In NER, TFIIH acts by opening DNA around the lesion to allow the excision of the damaged oligonucleotide and its replacement by a new DNA fragment. The ATPase activity of XPB/ptr8, but not its helicase activity, is required for DNA opening. In transcription, TFIIH has an essential role in transcription initiation. When the pre-initiation complex (PIC) has been established, TFIIH is required for promoter opening and promoter escape. The ATP-dependent helicase activity of XPB/ptr8 is required for promoter escape but not for promoter opening. Plays a role in mRNA export. The chain is General transcription and DNA repair factor IIH helicase/translocase subunit XPB from Schizosaccharomyces pombe (strain 972 / ATCC 24843) (Fission yeast).